Consider the following 178-residue polypeptide: Caveolin-1 (178 aa).

Serine 2 is subject to N-acetylserine. Phosphoserine is present on serine 2. Residues serine 2–valine 94 form a required for homooligomerization region. The Cytoplasmic portion of the chain corresponds to serine 2–serine 104. Lysine 5 bears the N6-acetyllysine; alternate mark. Lysine 5 is covalently cross-linked (Glycyl lysine isopeptide (Lys-Gly) (interchain with G-Cter in ubiquitin); alternate). Tyrosine 6 bears the Phosphotyrosine mark. Phosphoserine is present on serine 9. At tyrosine 14 the chain carries Phosphotyrosine; by ABL1. Tyrosine 25 is subject to Phosphotyrosine. Glycyl lysine isopeptide (Lys-Gly) (interchain with G-Cter in ubiquitin) cross-links involve residues lysine 26 and lysine 30. Serine 37 bears the Phosphoserine mark. Residues lysine 39, lysine 47, and lysine 57 each participate in a glycyl lysine isopeptide (Lys-Gly) (interchain with G-Cter in ubiquitin) cross-link. Residues aspartate 82 to valine 94 form an interaction with CAVIN3 region. The helical intramembrane region spans alanine 105–leucine 125. The Cytoplasmic portion of the chain corresponds to histidine 126 to isoleucine 178. The tract at residues valine 131–glutamine 142 is interacts with SPRY1, SPRY2, SPRY3 and SPRY4. S-palmitoyl cysteine attachment occurs at residues cysteine 133, cysteine 143, and cysteine 156. The tract at residues serine 149 to phenylalanine 160 is interacts with SPRY1, SPRY2, and SPRY4. The segment at phenylalanine 167 to isoleucine 178 is interacts with SPRY1, SPRY2, SPRY3 and SPRY4.

Belongs to the caveolin family. As to quaternary structure, homooligomer. Interacts (via the N-terminus) with DPP4; the interaction is direct. Forms a stable heterooligomeric complex with CAV2 that targets to lipid rafts and drives caveolae formation. Interacts with PACSIN2; this interaction induces membrane tubulation. Interacts with BMX, BTK, CTNNB1, CDH1, GLIPR2, JUP, NOSTRIN, SNAP25 and STX1A. Interacts with SLC7A9. Interacts with TGFBR1. Interacts with CAVIN3 (via leucine-zipper domain) in a cholesterol-sensitive manner. Interacts with CAVIN1. Interacts with EHD2 in a cholesterol-dependent manner. Forms a ternary complex with UBXN6 and VCP; mediates CAV1 targeting to lysosomes for degradation. Interacts with ABCG1; this interaction regulates ABCG1-mediated cholesterol efflux. Interacts with NEU3; this interaction enhances NEU3 sialidase activity within caveola. Interacts (via C-terminus) with SPRY1, SPRY2 (via C-terminus), SPRY3, and SPRY4. Interacts with IGFBP5; this interaction allows trafficking of IGFBP5 from the plasma membrane to the nucleus. Post-translationally, phosphorylated at Tyr-14 by ABL1 in response to oxidative stress. Ubiquitinated. Undergo monoubiquitination and multi- and/or polyubiquitination. Monoubiquitination of N-terminal lysines promotes integration in a ternary complex with UBXN6 and VCP which promotes oligomeric CAV1 targeting to lysosomes for degradation. Ubiquitinated by ZNRF1; leading to degradation and modulation of the TLR4-mediated immune response.

Its subcellular location is the golgi apparatus membrane. It localises to the cell membrane. It is found in the membrane. The protein resides in the caveola. The protein localises to the membrane raft. May act as a scaffolding protein within caveolar membranes. Forms a stable heterooligomeric complex with CAV2 that targets to lipid rafts and drives caveolae formation. Mediates the recruitment of CAVIN proteins (CAVIN1/2/3/4) to the caveolae. Interacts directly with G-protein alpha subunits and can functionally regulate their activity. Involved in the costimulatory signal essential for T-cell receptor (TCR)-mediated T-cell activation. Its binding to DPP4 induces T-cell proliferation and NF-kappa-B activation in a T-cell receptor/CD3-dependent manner. Recruits CTNNB1 to caveolar membranes and may regulate CTNNB1-mediated signaling through the Wnt pathway. Negatively regulates TGFB1-mediated activation of SMAD2/3 by mediating the internalization of TGFBR1 from membrane rafts leading to its subsequent degradation. Binds 20(S)-hydroxycholesterol (20(S)-OHC). The sequence is that of Caveolin-1 (CAV1) from Chlorocebus aethiops (Green monkey).